The chain runs to 102 residues: Small ribosomal subunit protein uS10 (102 aa).

This sequence belongs to the universal ribosomal protein uS10 family. Part of the 30S ribosomal subunit.

Involved in the binding of tRNA to the ribosomes. The protein is Small ribosomal subunit protein uS10 of Staphylococcus aureus (strain JH9).